The chain runs to 314 residues: MSRPRRRGRDVHGVLLLDKPQGLSSNDALQKVKRIYNANRAGHTGALDPLATGMLPICLGEATKFSQYLLDSDKRYRVIARLGQRTDTSDADGTVVEERPVTFSEQQLQDALESFRGDTLQVPTMFSALKYQGKPLYEYARQGIEVPREARPITVYELLFIRHEGDELELEVHCSKGTYIRTIIDDLGEKLGCGAHVIYLRRLTVSKYPVERMVTLEQLNALLEEAQTRDIAPSELLDPLLMPMDSPAADYPVVNLPLTSSVYFKNGNPVRTTGAPSEGLVRVTEGEAQKFLGMGEIDSEGRVAPRRLVVEYPV.

His43 provides a ligand contact to substrate. The active-site Nucleophile is Asp48. 3 residues coordinate substrate: Tyr76, Tyr179, and Leu200.

It belongs to the pseudouridine synthase TruB family. Type 1 subfamily.

The catalysed reaction is uridine(55) in tRNA = pseudouridine(55) in tRNA. Responsible for synthesis of pseudouridine from uracil-55 in the psi GC loop of transfer RNAs. This chain is tRNA pseudouridine synthase B, found in Cronobacter sakazakii (strain ATCC BAA-894) (Enterobacter sakazakii).